Here is a 1412-residue protein sequence, read N- to C-terminus: DNA-directed RNA polymerase subunit beta' (1412 aa).

Zn(2+) is bound by residues cysteine 70, cysteine 72, cysteine 85, and cysteine 88. Mg(2+) is bound by residues aspartate 460, aspartate 462, and aspartate 464. Residues cysteine 814, cysteine 888, cysteine 895, and cysteine 898 each contribute to the Zn(2+) site. A disordered region spans residues 1378–1412 (EREAARQLANPFEDAPVTVDADAPQSDAGQEGSAE).

The protein belongs to the RNA polymerase beta' chain family. In terms of assembly, the RNAP catalytic core consists of 2 alpha, 1 beta, 1 beta' and 1 omega subunit. When a sigma factor is associated with the core the holoenzyme is formed, which can initiate transcription. Mg(2+) serves as cofactor. Zn(2+) is required as a cofactor.

It carries out the reaction RNA(n) + a ribonucleoside 5'-triphosphate = RNA(n+1) + diphosphate. DNA-dependent RNA polymerase catalyzes the transcription of DNA into RNA using the four ribonucleoside triphosphates as substrates. This is DNA-directed RNA polymerase subunit beta' from Bordetella petrii (strain ATCC BAA-461 / DSM 12804 / CCUG 43448).